The primary structure comprises 334 residues: Tryptophan--tRNA ligase (334 aa).

ATP-binding positions include 11–13 (QPS) and 19–20 (GN). Positions 12–20 (PSGELTIGN) match the 'HIGH' region motif. D135 contributes to the L-tryptophan binding site. ATP contacts are provided by residues 147–149 (GED), V186, and 195–199 (KMSKS). The short motif at 195–199 (KMSKS) is the 'KMSKS' region element.

The protein belongs to the class-I aminoacyl-tRNA synthetase family. Homodimer.

The protein resides in the cytoplasm. It carries out the reaction tRNA(Trp) + L-tryptophan + ATP = L-tryptophyl-tRNA(Trp) + AMP + diphosphate + H(+). Catalyzes the attachment of tryptophan to tRNA(Trp). This Shigella flexneri protein is Tryptophan--tRNA ligase.